The primary structure comprises 102 residues: Alpha-ketoglutarate dehydrogenase component 4 (102 aa).

Glycine 2 is subject to N-acetylglycine. Residue lysine 4 is modified to N6-succinyllysine. A disordered region spans residues 23–70; the sequence is KFPNRRDKPKLSASEALGSAALPSHSSAISQHSKGSTSPDLLMHQGPP. Over residues 33–46 the composition is skewed to low complexity; sequence LSASEALGSAALPS. Over residues 47-61 the composition is skewed to polar residues; that stretch reads HSSAISQHSKGSTSP. Residues serine 48, serine 60, and serine 89 each carry the phosphoserine modification.

The protein belongs to the alpha-ketoglutarate dehydrogenase component 4 family. Component of the 2-oxoglutarate dehydrogenase complex (OGDHC), composed of OGDH (2-oxoglutarate dehydrogenase; also called E1 subunit), DLST (dihydrolipoamide succinyltransferase; also called E2 subunit) and DLD (dihydrolipoamide dehydrogenase; also called E3 subunit), and the assembly factor KGD4. Within OGDHC complex, interacts (via N-terminus) with E3 subunit and (via C-terminus) with E2 subunit.

Its subcellular location is the mitochondrion. Molecular adapter that is necessary to form a stable 2-oxoglutarate dehydrogenase enzyme complex (OGDHC). Enables the specific recruitment of E3 subunit to E2 subunit in the 2-oxoglutarate dehydrogenase complex (OGDHC). The sequence is that of Alpha-ketoglutarate dehydrogenase component 4 from Mus musculus (Mouse).